We begin with the raw amino-acid sequence, 129 residues long: DCPSGWSSYEGHCYKPFKLYKTWDDAERFCTEQAKGGHLVSIESAGEADFVAQLVTENIQNTKSYVWIGLRVQGKEKQCSSEWSDGSSVSYENWIEAESKTCLGLEKETGFRKWVNIYCGQQNPFVCEA.

The region spanning 1-129 (DCPSGWSSYE…GQQNPFVCEA (129 aa)) is the C-type lectin domain. 3 disulfide bridges follow: Cys-2–Cys-13, Cys-30–Cys-127, and Cys-102–Cys-119. Positions 41, 43, and 47 each coordinate Ca(2+). Position 128 (Glu-128) interacts with Ca(2+).

Belongs to the snaclec family. In terms of assembly, heterodimer of subunits A and B; disulfide-linked. In terms of tissue distribution, expressed by the venom gland.

The protein resides in the secreted. Its function is as follows. Anticoagulant protein which binds to the gamma-carboxyglutamic acid-domain regions of factor IX (F9) (but not factor X) in the presence of calcium with a 1 to 1 stoichiometry. The protein is Snaclec coagulation factor IX-binding protein subunit A of Protobothrops flavoviridis (Habu).